Reading from the N-terminus, the 2224-residue chain is Myomegalin (2224 aa).

4 coiled-coil regions span residues 41-97, 162-205, 236-318, and 350-682; these read REDV…RQQE, DQYS…LLEE, VSES…REML, and CSQL…ALRQ. The interval 206 to 236 is disordered; it reads PASMEVQPVPKGLPTQQKPDLHETPTTQPPV. Polar residues predominate over residues 219-236; that stretch reads PTQQKPDLHETPTTQPPV. Residues 703–751 form a disordered region; the sequence is GVTSIGPHHGEQTDQGSMQMPSRDDSTSLTAREEASIPRSTLGDSDTVA. Position 705 is a phosphothreonine (T705). Residues 724–738 are compositionally biased toward basic and acidic residues; that stretch reads SRDDSTSLTAREEAS. 3 coiled-coil regions span residues 745–822, 856–886, and 949–986; these read GDSD…QLVD, NKRQ…RQLY, and AQEM…AGFS. Disordered regions lie at residues 1098–1128, 1141–1161, and 1270–1298; these read TGLP…SLPL, NKSQ…GSTK, and VSPP…DDSS. The span at 1112-1124 shows a compositional bias: polar residues; sequence ENTTTARPGSRPQ. Coiled coils occupy residues 1159–1187, 1295–1331, and 1377–1401; these read STKH…SEAT, DDSS…LSAT, and GLQA…LPKT. Basic and acidic residues predominate over residues 1276 to 1298; the sequence is KPLENKPGKQEEFRAHGTPDDSS. An Olduvai domain is found at 1497-1588; that stretch reads KDHKSEKEEA…DEKKPSPSHS (92 aa). 4 disordered regions span residues 1576–1637, 1736–1757, 1805–1824, and 1962–2001; these read THYD…SLSQ, SSGQ…LSSG, LSST…QGLE, and KASL…LNSP. Residues 1599 to 1609 show a composition bias toward polar residues; sequence ESSSSPISLPT. Over residues 1748–1757 the composition is skewed to low complexity; that stretch reads GSVSGELSSG. Residues 1769–1958 are a coiled coil; sequence GADLLEEHLG…RLQLEQQMDR (190 aa). Residues 2148-2191 adopt a coiled-coil conformation; sequence KEGQLMEKELLDLRAQVSQQEQILQNTAARLKRANQRKKSMEQF.

As to quaternary structure, interacts with PDE4D. Isoform 2 interacts with MAPRE1 and MAPRE3. Isoform 2 forms a pericentrosomal complex with AKAP9, CDK5RAP2 and EB1/MAPRE1; within this complex, may mediate MAPRE1-binding to CDK5RAP2. Interaction with AKAP9 stabilizes both proteins. Isoform 2 interacts (via N-terminus) with CAMSAP2; this interaction is much stronger in the presence of AKAP9. In complex with AKAP9, Isoform 2 recruits CAMSAP2 to the Golgi apparatus. Isoform 2 interacts with unglycosylated LGALS3BP; this interaction may connect the pericentrosomal complex to the gamma-tubulin ring complex (gamma-TuRC) to promote microtubule assembly and acetylation.

It is found in the cytoplasm. The protein resides in the cytoskeleton. Its subcellular location is the microtubule organizing center. The protein localises to the centrosome. It localises to the golgi apparatus. Functionally, functions as an anchor sequestering components of the cAMP-dependent pathway to Golgi and/or centrosomes. In terms of biological role, participates in microtubule dynamics, promoting microtubule assembly. Depending upon the cell context, may act at the level of the Golgi apparatus or that of the centrosome. In complex with AKAP9, recruits CAMSAP2 to the Golgi apparatus and tethers non-centrosomal minus-end microtubules to the Golgi, an important step for polarized cell movement. In complex with AKAP9, EB1/MAPRE1 and CDK5RAP2, contributes to microtubules nucleation and extension from the centrosome to the cell periphery, a crucial process for directed cell migration, mitotic spindle orientation and cell-cycle progression. This chain is Myomegalin (Pde4dip), found in Mus musculus (Mouse).